We begin with the raw amino-acid sequence, 293 residues long: Protein YIF1A (293 aa).

The tract at residues M1 to D27 is disordered. The residue at position 2 (A2) is an N-acetylalanine. Topologically, residues A2 to D138 are cytoplasmic. S12 is modified (phosphoserine). Residues L139–I159 traverse the membrane as a helical segment. Residues Q160–T174 lie on the Lumenal side of the membrane. Residues A175–V195 form a helical membrane-spanning segment. The Cytoplasmic portion of the chain corresponds to R196–H203. The chain crosses the membrane as a helical span at residues L204 to G226. Topologically, residues S227–G229 are lumenal. Residues Y230–L249 traverse the membrane as a helical segment. Topologically, residues R250–Y271 are cytoplasmic. Residues L272–V292 traverse the membrane as a helical segment.

Belongs to the YIF1 family. Interacts with YIPF5.

Its subcellular location is the endoplasmic reticulum membrane. The protein localises to the golgi apparatus membrane. It localises to the endoplasmic reticulum-Golgi intermediate compartment membrane. Its function is as follows. Possible role in transport between endoplasmic reticulum and Golgi. The polypeptide is Protein YIF1A (Yif1a) (Mus musculus (Mouse)).